The chain runs to 312 residues: Ornithine carbamoyltransferase (312 aa).

Residues 60 to 63 (STRT), Gln87, Arg111, and 138 to 141 (HPCQ) each bind carbamoyl phosphate. Residues Asn169, Asp229, and 233-234 (SM) each bind L-ornithine. Carbamoyl phosphate contacts are provided by residues 268 to 269 (CL) and Arg296.

This sequence belongs to the aspartate/ornithine carbamoyltransferase superfamily. OTCase family.

The protein resides in the cytoplasm. The enzyme catalyses carbamoyl phosphate + L-ornithine = L-citrulline + phosphate + H(+). It participates in amino-acid biosynthesis; L-arginine biosynthesis; L-arginine from L-ornithine and carbamoyl phosphate: step 1/3. Its function is as follows. Reversibly catalyzes the transfer of the carbamoyl group from carbamoyl phosphate (CP) to the N(epsilon) atom of ornithine (ORN) to produce L-citrulline. This is Ornithine carbamoyltransferase from Rhodopseudomonas palustris (strain BisA53).